A 409-amino-acid chain; its full sequence is Peptidase T (409 aa).

Residue His-78 participates in Zn(2+) binding. The active site involves Asp-80. Asp-140 serves as a coordination point for Zn(2+). Glu-173 acts as the Proton acceptor in catalysis. Residues Glu-174, Asp-196, and His-379 each coordinate Zn(2+).

It belongs to the peptidase M20B family. Zn(2+) serves as cofactor.

Its subcellular location is the cytoplasm. It catalyses the reaction Release of the N-terminal residue from a tripeptide.. Functionally, cleaves the N-terminal amino acid of tripeptides. In Salmonella dublin (strain CT_02021853), this protein is Peptidase T.